The sequence spans 375 residues: Trichodiene synthase (375 aa).

This sequence belongs to the trichodiene synthase family.

The enzyme catalyses (2E,6E)-farnesyl diphosphate = trichodiene + diphosphate. It functions in the pathway sesquiterpene biosynthesis; trichothecene biosynthesis. Functionally, TS is a member of the terpene cyclase group of enzymes. It catalyzes the isomerization and cyclization of farnesyl pyro-phosphate to form trichodiene, the first cyclic intermediate in the biosynthetic pathway for trichothecenes. It serves to branch trichothecene biosynthesis from the isoprenoid pathway. In Fusarium pseudograminearum (Wheat and barley crown-rot fungus), this protein is Trichodiene synthase (TRI5).